The following is a 448-amino-acid chain: FAD-linked oxidoreductase nodO (448 aa).

One can recognise an FAD-binding PCMH-type domain in the interval 35 to 206 (PEHFPLAIVK…IRFFLKTCPL (172 aa)).

Belongs to the oxygen-dependent FAD-linked oxidoreductase family. FAD serves as cofactor.

Its pathway is secondary metabolite biosynthesis. Its function is as follows. FAD-linked oxidoreductase; part of the gene cluster that mediates the biosynthesis of the indole diterpenes nodulisporic acids (NA). Nodulisporic acid A (NAA) and its chemically modified derivatives are of particular significance because of their highly potent insecticidal activity against blood-feeding arthropods and lack of observable adverse effects on mammals, in particular the tremogenicity associated with the paspaline-derived IDTs is not observed. The geranylgeranyl diphosphate (GGPP) synthase ggs1, localized outside of the cluster, is proposed to catalyze the first step in nodulisporic acid biosynthesis via conversion of farnesyl pyrophosphate and isopentyl pyrophosphate into geranylgeranyl pyrophosphate (GGPP). Condensation of indole-3-glycerol phosphate with GGPP by the prenyl transferase nodC then forms 3-geranylgeranylindole (3-GGI). Epoxidation by the FAD-dependent monooxygenase nodM leads to a single-epoxidized-GGI that is substrate of the terpene cyclase nodB for cyclization to yield emindole SB. The terminal methyl carbon, C28, of emindole SB is then oxidized by the cytochrome P450 monooxygenase nodW to produce nodulisporic acid F (NAF), the pentacyclic core of NAA. NAF is converted to nodulisporic acid E (NAE) via prenylation. This step is probably performed by one of the indole diterpene prenyltransferases nodD1 or nodD2. Several oxidation steps performed by the FAD-linked oxidoreductase nodO and one of the cytochrome P450 monooxygenase nodR, nodX or nodZ further convert NAE to nodulisporic acid D (NAD). NAD is substrate of cytochrome P450 monooxygenase nodJ to produce the precursor of nodulisporic acid C (NAC), converted to NAC by one of the indole diterpene prenyltransferases nodD1 or nodD2. The FAD-dependent monooxygenase nodY2 then oxidizes NAC to nodulisporic acid B (NAB). Finally NAB is converted to NAA by one of the cytochrome P450 monooxygenases nodR, nodX or nodZ. In Hypoxylon pulicicidum, this protein is FAD-linked oxidoreductase nodO.